We begin with the raw amino-acid sequence, 386 residues long: Bifunctional enzyme IspD/IspF (386 aa).

The 2-C-methyl-D-erythritol 4-phosphate cytidylyltransferase stretch occupies residues 1-229 (MIRGERVIGI…RARALLEAPV (229 aa)). The interval 230-386 (ATGVGYDTHR…AIALLVRAAG (157 aa)) is 2-C-methyl-D-erythritol 2,4-cyclodiphosphate synthase. 2 residues coordinate a divalent metal cation: Asp236 and His238. Residues 236 to 238 (DTH) and 261 to 262 (HS) each bind 4-CDP-2-C-methyl-D-erythritol 2-phosphate. Residue His269 participates in a divalent metal cation binding. 4-CDP-2-C-methyl-D-erythritol 2-phosphate-binding positions include 283-285 (DLG), 288-292 (FPDTD), 359-362 (TTGE), Phe366, and Arg369.

In the N-terminal section; belongs to the IspD/TarI cytidylyltransferase family. IspD subfamily. This sequence in the C-terminal section; belongs to the IspF family. A divalent metal cation serves as cofactor.

The catalysed reaction is 2-C-methyl-D-erythritol 4-phosphate + CTP + H(+) = 4-CDP-2-C-methyl-D-erythritol + diphosphate. It catalyses the reaction 4-CDP-2-C-methyl-D-erythritol 2-phosphate = 2-C-methyl-D-erythritol 2,4-cyclic diphosphate + CMP. It participates in isoprenoid biosynthesis; isopentenyl diphosphate biosynthesis via DXP pathway; isopentenyl diphosphate from 1-deoxy-D-xylulose 5-phosphate: step 2/6. Its pathway is isoprenoid biosynthesis; isopentenyl diphosphate biosynthesis via DXP pathway; isopentenyl diphosphate from 1-deoxy-D-xylulose 5-phosphate: step 4/6. Bifunctional enzyme that catalyzes the formation of 4-diphosphocytidyl-2-C-methyl-D-erythritol from CTP and 2-C-methyl-D-erythritol 4-phosphate (MEP) (IspD), and catalyzes the conversion of 4-diphosphocytidyl-2-C-methyl-D-erythritol 2-phosphate (CDP-ME2P) to 2-C-methyl-D-erythritol 2,4-cyclodiphosphate (ME-CPP) with a corresponding release of cytidine 5-monophosphate (CMP) (IspF). This is Bifunctional enzyme IspD/IspF from Anaeromyxobacter dehalogenans (strain 2CP-C).